The following is a 214-amino-acid chain: MGCFITFEGIEGCGKTTQIKLLEQHLAEKGFKVLLTREPGGCPIADQIRAILLDAANSAMTPSAELLLYAAARAQHVEEVIKPALADDCIVLCDRFTDATVAYQGYGRGLDLDSIGYLNQLATSGLKPQLTILLDCPVEVGLKRALARINGISAGAREERFELESTLFHQKVRNGYLKLAENEKGRFLIVDGGTNVDETRVAVTTAVIGRLNGN.

ATP is bound at residue 9–16 (GIEGCGKT).

This sequence belongs to the thymidylate kinase family.

It catalyses the reaction dTMP + ATP = dTDP + ADP. Phosphorylation of dTMP to form dTDP in both de novo and salvage pathways of dTTP synthesis. This Geotalea daltonii (strain DSM 22248 / JCM 15807 / FRC-32) (Geobacter daltonii) protein is Thymidylate kinase.